A 418-amino-acid polypeptide reads, in one-letter code: Protease LasA (418 aa).

Positions 1–31 (MQHKRSRALASPRSPFLFALLALAVGGTANA) are cleaved as a signal peptide. Positions 32–236 (HDDGLPAFRY…ARQLQAKAAL (205 aa)) are excised as a propeptide. Zn(2+) is bound by residues histidine 259 and aspartate 272. The cysteines at positions 301 and 347 are disulfide-linked. Residues histidine 317 and histidine 356 each act as proton donor/acceptor in the active site. Position 358 (histidine 358) interacts with Zn(2+). A disulfide bond links cysteine 391 and cysteine 406.

Belongs to the peptidase M23A family. The cofactor is Zn(2+).

The protein resides in the secreted. Its function is as follows. Involved in proteolysis and elastolysis (degradation of the host protein elastin). Has staphylolytic activity (degrades pentaglycine cross-links in cell wall peptidoglycan), preferring Gly-Gly-|-X substrates where X is Ala or Gly. Enhances the elastolytic but not proteolytic activity of elastase (lasB) and elastolytic activity of other proteases. Degradation of elastin is likely to contribute to the pathogenicity of P.aeruginosa. The sequence is that of Protease LasA (lasA) from Pseudomonas aeruginosa (strain UCBPP-PA14).